The primary structure comprises 263 residues: Probable ribosomal RNA small subunit methyltransferase A (263 aa).

S-adenosyl-L-methionine is bound by residues leucine 12, glycine 37, glutamate 58, aspartate 83, and asparagine 100.

Belongs to the class I-like SAM-binding methyltransferase superfamily. rRNA adenine N(6)-methyltransferase family. RsmA subfamily.

Its subcellular location is the cytoplasm. Its function is as follows. Specifically dimethylates two adjacent adenosines in the loop of a conserved hairpin near the 3'-end of 16S rRNA in the 30S particle. May play a critical role in biogenesis of 30S subunits. The protein is Probable ribosomal RNA small subunit methyltransferase A of Methanococcus maripaludis (strain C5 / ATCC BAA-1333).